The primary structure comprises 82 residues: Cell division topological specificity factor (82 aa).

The protein belongs to the MinE family.

In terms of biological role, prevents the cell division inhibition by proteins MinC and MinD at internal division sites while permitting inhibition at polar sites. This ensures cell division at the proper site by restricting the formation of a division septum at the midpoint of the long axis of the cell. The chain is Cell division topological specificity factor from Buchnera aphidicola subsp. Cinara cedri (strain Cc).